Here is a 762-residue protein sequence, read N- to C-terminus: Primary amine oxidase, lung isozyme (762 aa).

The first 16 residues, 1–16, serve as a signal peptide directing secretion; that stretch reads MFIFIFLSLWTLLVMG. The segment at 23-54 is disordered; sequence GSEEGVGKQCHPSLPPRCPSRSPSDQPWTHPD. Residue Asn-136 is glycosylated (N-linked (GlcNAc...) asparagine). The cysteines at positions 197 and 198 are disulfide-linked. Thr-211 carries an O-linked (GalNAc...) threonine glycan. Asn-231 and Asn-293 each carry an N-linked (GlcNAc...) asparagine glycan. Position 383 to 393 (383 to 393) interacts with substrate; the sequence is YMDACFGMGKF. Catalysis depends on Asp-385, which acts as the Proton acceptor. A disulfide bond links Cys-403 and Cys-429. Residue 467–472 coordinates substrate; the sequence is LLNYDY. The active-site Schiff-base intermediate with substrate; via topaquinone is the Tyr-470. Tyr-470 is modified (2',4',5'-topaquinone). Residues His-519 and His-521 each contribute to the Cu cation site. Residues Asp-528, Leu-529, Asp-530, and Glu-571 each coordinate Ca(2+). 577 to 584 serves as a coordination point for heparin; that stretch reads PLGGGSPR. Asn-617 carries an N-linked (GlcNAc...) asparagine glycan. Ca(2+) contacts are provided by Phe-662 and Asn-664. The N-linked (GlcNAc...) asparagine glycan is linked to Asn-665. Positions 666, 672, and 673 each coordinate Ca(2+). His-683 is a binding site for Cu cation. An intrachain disulfide couples Cys-733 to Cys-740.

The protein belongs to the copper/topaquinone oxidase family. As to quaternary structure, homodimer; disulfide-linked. It depends on Cu cation as a cofactor. Ca(2+) is required as a cofactor. The cofactor is L-topaquinone. Topaquinone (TPQ) is generated by copper-dependent autoxidation of a specific tyrosyl residue. In terms of tissue distribution, expressed in lung, spleen, heart and kidney.

The protein localises to the secreted. Its subcellular location is the extracellular space. The catalysed reaction is a primary methyl amine + O2 + H2O = an aldehyde + H2O2 + NH4(+). In Bos taurus (Bovine), this protein is Primary amine oxidase, lung isozyme.